The primary structure comprises 336 residues: MTDRAMSYPRILADVGGTNVRFAMETAPMRIGEITAYKVAEHASLEAAMRLYMLTRSGAARPRHAAIGLANPVTGDQVKLTNHNWAFSVEAMRRALDLDTLVAINDFTSLALALPYLPDASLVQVRDGTAVATAPRALIGPGTGLGVSGLIPAPGGAVALAGEGGHIEIMPVTDDEWIAWRAAHDQFGRVSAERLLSGMGLSHIHAALSAEMGTPLEVPLAPAQVTDGAMRAGDPVCRRAFDAFCGMLGSVAADVALVLGARGGVYLGGGIVPRFVDALRASTFAERFVAKGRMGSFLADVPVYVITAEYPALPGLARALADRLEADARRAETSQS.

13-18 (ADVGGT) provides a ligand contact to ATP.

Belongs to the bacterial glucokinase family.

The protein localises to the cytoplasm. The catalysed reaction is D-glucose + ATP = D-glucose 6-phosphate + ADP + H(+). The polypeptide is Glucokinase (Cupriavidus metallidurans (strain ATCC 43123 / DSM 2839 / NBRC 102507 / CH34) (Ralstonia metallidurans)).